We begin with the raw amino-acid sequence, 461 residues long: Cysteine--tRNA ligase (461 aa).

C28 contacts Zn(2+). Positions V30 to H40 match the 'HIGH' region motif. Residues C209, H234, and E238 each coordinate Zn(2+). Positions K266–S270 match the 'KMSKS' region motif. Residue K269 coordinates ATP.

It belongs to the class-I aminoacyl-tRNA synthetase family. As to quaternary structure, monomer. The cofactor is Zn(2+).

The protein localises to the cytoplasm. It carries out the reaction tRNA(Cys) + L-cysteine + ATP = L-cysteinyl-tRNA(Cys) + AMP + diphosphate. The polypeptide is Cysteine--tRNA ligase (Serratia proteamaculans (strain 568)).